Here is a 217-residue protein sequence, read N- to C-terminus: Casparian strip membrane protein 6 (217 aa).

Residues 1–57 (MEEAKHIEAVEAKQIEAEEAQRIKAGEAKQIEAGETSRSSRKVITFEPKLVINKGIS) are Cytoplasmic-facing. A helical membrane pass occupies residues 58-78 (VLGFVLRLFAVFGTIGSALAM). At 79-103 (GTTHESVVSLSQLVLLKVKYSDLPT) the chain is on the extracellular side. A helical transmembrane segment spans residues 104-124 (LMFFVVANAIAGGYLVLSLPV). Over 125–138 (SIFHIFSTKAKTSR) the chain is Cytoplasmic. Residues 139-159 (IILLVIDTVMLALVSSGASAA) traverse the membrane as a helical segment. At 160 to 191 (TATVYLAHEGNTTANWPPICQQFDGFCERISG) the chain is on the extracellular side. Asn-170 carries N-linked (GlcNAc...) asparagine glycosylation. A helical membrane pass occupies residues 192 to 212 (SLIGSFCAVILLMLIVINSAI). Over 213-217 (SLSRH) the chain is Cytoplasmic.

It belongs to the Casparian strip membrane proteins (CASP) family. As to quaternary structure, homodimer and heterodimers.

The protein localises to the cell membrane. Regulates membrane-cell wall junctions and localized cell wall deposition. Required for establishment of the Casparian strip membrane domain (CSD) and the subsequent formation of Casparian strips, a cell wall modification of the root endodermis that determines an apoplastic barrier between the intraorganismal apoplasm and the extraorganismal apoplasm and prevents lateral diffusion. The polypeptide is Casparian strip membrane protein 6 (Arabidopsis lyrata subsp. lyrata (Lyre-leaved rock-cress)).